A 560-amino-acid polypeptide reads, in one-letter code: Vacuolar protein 8 (560 aa).

Glycine 2 is lipidated: N-myristoyl glycine. Cysteine 4 carries the S-palmitoyl cysteine lipid modification. ARM repeat units lie at residues 39-76 (NRAETDFFSGEPLRALSTLVYSDNIDLQRSASLTFAEI), 77-116 (TERDVRAVDRDTLGPILFLLENSDIEVQRAASAALGNLAV), 118-157 (TDNKVLIVQLGGLQPLIKQMMSPNVEVQCNAVGCITNLAT), 159-198 (EENKAKIARSGALGPLTRLAKSKDMRVQRNATGALLNMTH), 200-239 (DENRQQLVNAGAIPVLVQLLSSSDVDVQYYCTTALSNIAV), 243-282 (NRRKLAETEQRLVQYLVNLTESSSPKVQCQAALALRNLAS), 284-323 (EKYQLEIVQAHGLGPLLRLLRSSYLPLILSAVACIRNISI), 325-365 (PQNE…NLAA), and 409-448 (DELKTHLLELGVFDVLIPLTMSPSVEVQGNSAAALGNLSS).

The protein belongs to the beta-catenin family.

It is found in the vacuole membrane. In terms of biological role, functions in both vacuole inheritance and protein targeting from the cytoplasm to vacuole. This is Vacuolar protein 8 (VAC8) from Chaetomium globosum (strain ATCC 6205 / CBS 148.51 / DSM 1962 / NBRC 6347 / NRRL 1970) (Soil fungus).